We begin with the raw amino-acid sequence, 170 residues long: Acetyl-CoA decarbonylase/synthase complex subunit epsilon 2 (170 aa).

Belongs to the CdhB family. Heterotetramer of two alpha and two epsilon subunits. The ACDS complex is made up of alpha, epsilon, beta, gamma and delta subunits with a probable stoichiometry of (alpha(2)epsilon(2))(4)-beta(8)-(gamma(1)delta(1))(8).

It functions in the pathway one-carbon metabolism; methanogenesis from acetate. Part of a complex that catalyzes the reversible cleavage of acetyl-CoA, allowing growth on acetate as sole source of carbon and energy. The alpha-epsilon subcomponent functions as a carbon monoxide dehydrogenase. The precise role of the epsilon subunit is unclear; it may have a stabilizing role within the alpha(2)epsilon(2) component and/or be involved in electron transfer to FAD during a potential FAD-mediated CO oxidation. The chain is Acetyl-CoA decarbonylase/synthase complex subunit epsilon 2 (cdhB2) from Methanosarcina thermophila.